The chain runs to 338 residues: DNA-directed RNA polymerase subunit alpha (338 aa).

Positions 1-226 (MLIAQRPTLT…ELFGLTRELN (226 aa)) are alpha N-terminal domain (alpha-NTD). The interval 243–338 (YAESLGTPVE…DDDYAETEQY (96 aa)) is alpha C-terminal domain (alpha-CTD). The disordered stretch occupies residues 319-338 (AAAEAYDEANDDDYAETEQY). The segment covering 323 to 338 (AYDEANDDDYAETEQY) has biased composition (acidic residues).

It belongs to the RNA polymerase alpha chain family. As to quaternary structure, homodimer. The RNAP catalytic core consists of 2 alpha, 1 beta, 1 beta' and 1 omega subunit. When a sigma factor is associated with the core the holoenzyme is formed, which can initiate transcription.

It carries out the reaction RNA(n) + a ribonucleoside 5'-triphosphate = RNA(n+1) + diphosphate. Its function is as follows. DNA-dependent RNA polymerase catalyzes the transcription of DNA into RNA using the four ribonucleoside triphosphates as substrates. The sequence is that of DNA-directed RNA polymerase subunit alpha from Cutibacterium acnes (strain DSM 16379 / KPA171202) (Propionibacterium acnes).